A 168-amino-acid chain; its full sequence is Ribosome maturation factor RimM (168 aa).

Residues 95–168 (KEGYYWSDLI…QIMVDWELDY (74 aa)) form the PRC barrel domain.

Belongs to the RimM family. As to quaternary structure, binds ribosomal protein uS19.

It is found in the cytoplasm. In terms of biological role, an accessory protein needed during the final step in the assembly of 30S ribosomal subunit, possibly for assembly of the head region. Essential for efficient processing of 16S rRNA. May be needed both before and after RbfA during the maturation of 16S rRNA. It has affinity for free ribosomal 30S subunits but not for 70S ribosomes. The protein is Ribosome maturation factor RimM of Nitrosomonas eutropha (strain DSM 101675 / C91 / Nm57).